The chain runs to 268 residues: Ubiquinone biosynthesis protein COQ4 homolog, mitochondrial (268 aa).

Zn(2+) is bound by residues His-171, Asp-172, His-175, and Glu-187.

Belongs to the COQ4 family. In terms of assembly, component of a multi-subunit COQ enzyme complex. Zn(2+) serves as cofactor.

The protein resides in the mitochondrion inner membrane. The enzyme catalyses a 4-hydroxy-3-methoxy-5-(all-trans-polyprenyl)benzoate + H(+) = a 2-methoxy-6-(all-trans-polyprenyl)phenol + CO2. It participates in cofactor biosynthesis; ubiquinone biosynthesis. Functionally, lyase that catalyzes the C1-decarboxylation of 4-hydroxy-3-methoxy-5-(all-trans-polyprenyl)benzoic acid into 2-methoxy-6-(all-trans-polyprenyl)phenol during ubiquinone biosynthesis. This is Ubiquinone biosynthesis protein COQ4 homolog, mitochondrial from Drosophila yakuba (Fruit fly).